A 249-amino-acid chain; its full sequence is Beta-crystallin B1 (249 aa).

Residues 1–49 form a disordered region; the sequence is MSQPAVKASATAAVNPGPDGKGKGAPPPGPAPGSGPAQAPAQPMPAAKG. Ser2 carries the post-translational modification N-acetylserine. The interval 2–55 is N-terminal arm; sequence SQPAVKASATAAVNPGPDGKGKGAPPPGPAPGSGPAQAPAQPMPAAKGDLPPGS. A compositionally biased stretch (low complexity) spans 34–49; it reads SGPAQAPAQPMPAAKG. Beta/gamma crystallin 'Greek key' domains follow at residues 56-95 and 96-140; these read YKLVVFEQENFQGRRVEFSGECLNLGDRGFDRVRSIIVTS and GPWV…RPIR. The connecting peptide stretch occupies residues 141–145; it reads MDAQE. Beta/gamma crystallin 'Greek key' domains follow at residues 146-187 and 188-230; these read HKLC…RVSS and GTWV…RRLR. Residues 232–249 are C-terminal arm; the sequence is RQWHREGCFPVLAAEPPK.

It belongs to the beta/gamma-crystallin family. As to quaternary structure, homo/heterodimer, or complexes of higher-order. The structure of beta-crystallin oligomers seems to be stabilized through interactions between the N-terminal arms. Post-translationally, specific cleavages in the N-terminal arm occur during lens maturation and give rise to truncated forms, leading to impaired oligomerization and protein insolubilization.

Functionally, crystallins are the dominant structural components of the vertebrate eye lens. This is Beta-crystallin B1 (CRYBB1) from Sus scrofa (Pig).